Consider the following 206-residue polypeptide: Putative transporter protein AmiS2 (206 aa).

7 consecutive transmembrane segments (helical) span residues 4–24 (VGLL…LGTV), 29–49 (ASVL…VMLI), 56–76 (SAVL…YVGI), 86–106 (GIGW…FLSF), 113–133 (VFGV…LVLG), 142–162 (FTGW…AFLI), and 173–193 (VAAG…ILAA).

It belongs to the AmiS/UreI family.

The protein localises to the cell membrane. Functionally, possible transporter that might be responsible for the adsorption of amidase substrates or release of their hydrolysis products. The chain is Putative transporter protein AmiS2 (amiS2) from Rhodococcus erythropolis (Arthrobacter picolinophilus).